The chain runs to 215 residues: Pyridoxine/pyridoxamine 5'-phosphate oxidase (215 aa).

Residues 9-12 (RRDY) and lysine 69 each bind substrate. Residues 64–69 (RVLLLK), 79–80 (FT), lysine 86, and glutamine 108 each bind FMN. 3 residues coordinate substrate: tyrosine 126, arginine 130, and serine 134. FMN contacts are provided by residues 143 to 144 (QS) and tryptophan 188. 194–196 (RLH) contributes to the substrate binding site. Residue arginine 198 coordinates FMN.

Belongs to the pyridoxamine 5'-phosphate oxidase family. Homodimer. FMN serves as cofactor.

The catalysed reaction is pyridoxamine 5'-phosphate + O2 + H2O = pyridoxal 5'-phosphate + H2O2 + NH4(+). The enzyme catalyses pyridoxine 5'-phosphate + O2 = pyridoxal 5'-phosphate + H2O2. Its pathway is cofactor metabolism; pyridoxal 5'-phosphate salvage; pyridoxal 5'-phosphate from pyridoxamine 5'-phosphate: step 1/1. It functions in the pathway cofactor metabolism; pyridoxal 5'-phosphate salvage; pyridoxal 5'-phosphate from pyridoxine 5'-phosphate: step 1/1. Catalyzes the oxidation of either pyridoxine 5'-phosphate (PNP) or pyridoxamine 5'-phosphate (PMP) into pyridoxal 5'-phosphate (PLP). The chain is Pyridoxine/pyridoxamine 5'-phosphate oxidase from Pseudomonas entomophila (strain L48).